A 328-amino-acid chain; its full sequence is Tetraacyldisaccharide 4'-kinase (328 aa).

55–62 (TAGGNGKT) is a binding site for ATP.

This sequence belongs to the LpxK family.

The enzyme catalyses a lipid A disaccharide + ATP = a lipid IVA + ADP + H(+). The protein operates within glycolipid biosynthesis; lipid IV(A) biosynthesis; lipid IV(A) from (3R)-3-hydroxytetradecanoyl-[acyl-carrier-protein] and UDP-N-acetyl-alpha-D-glucosamine: step 6/6. Its function is as follows. Transfers the gamma-phosphate of ATP to the 4'-position of a tetraacyldisaccharide 1-phosphate intermediate (termed DS-1-P) to form tetraacyldisaccharide 1,4'-bis-phosphate (lipid IVA). The protein is Tetraacyldisaccharide 4'-kinase of Yersinia enterocolitica serotype O:8 / biotype 1B (strain NCTC 13174 / 8081).